We begin with the raw amino-acid sequence, 68 residues long: Probable tautomerase HP_0924 (68 aa).

The Proton acceptor; via imino nitrogen role is filled by P2.

Belongs to the 4-oxalocrotonate tautomerase family.

In Helicobacter pylori (strain ATCC 700392 / 26695) (Campylobacter pylori), this protein is Probable tautomerase HP_0924.